A 1118-amino-acid polypeptide reads, in one-letter code: Protein translocase subunit SecA (1118 aa).

Residues Gln-176, 194–198, and Asp-693 contribute to the ATP site; that span reads GEGKT. Residues 1034-1056 are disordered; the sequence is QQPVQQPKYRETKDEAGSAFGGG.

Belongs to the SecA family. In terms of assembly, monomer and homodimer. Part of the essential Sec protein translocation apparatus which comprises SecA, SecYEG and auxiliary proteins SecDF. Other proteins may also be involved.

Its subcellular location is the cell inner membrane. It localises to the cytoplasm. The enzyme catalyses ATP + H2O + cellular proteinSide 1 = ADP + phosphate + cellular proteinSide 2.. Part of the Sec protein translocase complex. Interacts with the SecYEG preprotein conducting channel. Has a central role in coupling the hydrolysis of ATP to the transfer of proteins into and across the cell membrane, serving as an ATP-driven molecular motor driving the stepwise translocation of polypeptide chains across the membrane. This is Protein translocase subunit SecA from Cytophaga hutchinsonii (strain ATCC 33406 / DSM 1761 / CIP 103989 / NBRC 15051 / NCIMB 9469 / D465).